Consider the following 208-residue polypeptide: Large ribosomal subunit protein uL3 (208 aa).

The segment at glycine 116 to alanine 148 is disordered.

It belongs to the universal ribosomal protein uL3 family. As to quaternary structure, part of the 50S ribosomal subunit. Forms a cluster with proteins L14 and L19.

Its function is as follows. One of the primary rRNA binding proteins, it binds directly near the 3'-end of the 23S rRNA, where it nucleates assembly of the 50S subunit. The sequence is that of Large ribosomal subunit protein uL3 from Streptococcus pyogenes serotype M12 (strain MGAS2096).